The chain runs to 543 residues: MKQTKYIFVTGGVLSSLGKGIAAASIATLLKNSGLKVSILKADPYINVDPGTMSPFEHGEVFVTDDGAETDLDLGHYERFLDESLSQDNNFTTGRVYQSVIEKERRGEYLGKTIQVIPHIVGEIKDRIKKAGEGKDILIVEIGGTVGDIEGLPFLEAIRALRLEVGKNNAMNIHLTLVPFIKAAGELKTKPTQHSVGELRRIGISPDMIICRSEKALDRDLKDKIAISCGVEKNCVIESVDAASIYQIPLNFLKQDILSPIAEILDLKNLKPNMENWDSLVKRVIAPSNEVKIAFVGKYVDLKESYKSLTEAIIHAGAALDTKVELKWVDSEKLENMESSEVFKDVSGILVAGGFGYRGVEGKIKAIQYARENKIPFLGICLGMQLALVEFARNVLKLKDVNSSEFNEKCQNPVVYLIDEFMDTNGEKQIRTAKTPLGGTMRLGAYKCDIKEKSLLAKVYNEVKSVKERHRHRYEANPKYRADFEKYGLIVSGESKGLIEAVELNCHPFFLAVQFHPEFTSRLEHVNPVICSFIKAAINYEDN.

The amidoligase domain stretch occupies residues 1 to 267 (MKQTKYIFVT…LSPIAEILDL (267 aa)). Serine 15 is a binding site for CTP. Serine 15 is a binding site for UTP. ATP contacts are provided by residues 16 to 21 (SLGKGI) and aspartate 73. 2 residues coordinate Mg(2+): aspartate 73 and glutamate 141. Residues 148–150 (DIE), 188–193 (KTKPTQ), and lysine 224 contribute to the CTP site. UTP contacts are provided by residues 188–193 (KTKPTQ) and lysine 224. The region spanning 292 to 543 (KIAFVGKYVD…IKAAINYEDN (252 aa)) is the Glutamine amidotransferase type-1 domain. Glycine 354 contacts L-glutamine. Cysteine 381 acts as the Nucleophile; for glutamine hydrolysis in catalysis. L-glutamine is bound by residues 382-385 (LGMQ), glutamate 405, and arginine 473. Catalysis depends on residues histidine 516 and glutamate 518.

This sequence belongs to the CTP synthase family. Homotetramer.

It catalyses the reaction UTP + L-glutamine + ATP + H2O = CTP + L-glutamate + ADP + phosphate + 2 H(+). The catalysed reaction is L-glutamine + H2O = L-glutamate + NH4(+). The enzyme catalyses UTP + NH4(+) + ATP = CTP + ADP + phosphate + 2 H(+). It participates in pyrimidine metabolism; CTP biosynthesis via de novo pathway; CTP from UDP: step 2/2. Its activity is regulated as follows. Allosterically activated by GTP, when glutamine is the substrate; GTP has no effect on the reaction when ammonia is the substrate. The allosteric effector GTP functions by stabilizing the protein conformation that binds the tetrahedral intermediate(s) formed during glutamine hydrolysis. Inhibited by the product CTP, via allosteric rather than competitive inhibition. In terms of biological role, catalyzes the ATP-dependent amination of UTP to CTP with either L-glutamine or ammonia as the source of nitrogen. Regulates intracellular CTP levels through interactions with the four ribonucleotide triphosphates. This chain is CTP synthase, found in Campylobacter jejuni subsp. jejuni serotype O:2 (strain ATCC 700819 / NCTC 11168).